The chain runs to 344 residues: Cytochrome c biogenesis protein CcsA (344 aa).

8 helical membrane passes run 21 to 41 (NVAF…AAFP), 45 to 65 (LLSE…AALL), 80 to 100 (LYES…LALH), 106 to 126 (WVGV…ALAL), 151 to 171 (VMLL…AFLI), 252 to 272 (LIGL…VWAN), 287 to 307 (WALI…TKGW), and 313 to 333 (ALLA…VNFL).

This sequence belongs to the CcmF/CycK/Ccl1/NrfE/CcsA family. As to quaternary structure, may interact with ccs1.

Its subcellular location is the cellular thylakoid membrane. In terms of biological role, required during biogenesis of c-type cytochromes (cytochrome c6 and cytochrome f) at the step of heme attachment. The protein is Cytochrome c biogenesis protein CcsA of Synechococcus sp. (strain JA-3-3Ab) (Cyanobacteria bacterium Yellowstone A-Prime).